The following is a 140-amino-acid chain: NADH-quinone oxidoreductase subunit I (140 aa).

2 consecutive 4Fe-4S ferredoxin-type domains span residues 42–71 (GSFT…VGSI) and 81–110 (ASYE…FNQE). [4Fe-4S] cluster-binding residues include Cys51, Cys54, Cys57, Cys61, Cys90, Cys93, Cys96, and Cys100.

It belongs to the complex I 23 kDa subunit family. In terms of assembly, NDH-1 is composed of 14 different subunits. Subunits NuoA, H, J, K, L, M, N constitute the membrane sector of the complex. Requires [4Fe-4S] cluster as cofactor.

Its subcellular location is the cell membrane. The enzyme catalyses a quinone + NADH + 5 H(+)(in) = a quinol + NAD(+) + 4 H(+)(out). In terms of biological role, NDH-1 shuttles electrons from NADH, via FMN and iron-sulfur (Fe-S) centers, to quinones in the respiratory chain. The immediate electron acceptor for the enzyme in this species is believed to be ubiquinone. Couples the redox reaction to proton translocation (for every two electrons transferred, four hydrogen ions are translocated across the cytoplasmic membrane), and thus conserves the redox energy in a proton gradient. The chain is NADH-quinone oxidoreductase subunit I from Carboxydothermus hydrogenoformans (strain ATCC BAA-161 / DSM 6008 / Z-2901).